We begin with the raw amino-acid sequence, 197 residues long: Phospholipid hydroperoxide glutathione peroxidase (197 aa).

Ser40 bears the Phosphoserine mark. Sec73 is an active-site residue. Sec73 is a non-standard amino acid (selenocysteine).

The protein belongs to the glutathione peroxidase family. In terms of assembly, monomer. Has a tendency to form higher mass oligomers. Interacts with FUNDC1; this interaction promotes GPX4 recruitment into mitochondria through TOM/TIM complex where it is degraded by mitophagy.

Its subcellular location is the mitochondrion. It localises to the cytoplasm. The enzyme catalyses a hydroperoxy polyunsaturated fatty acid + 2 glutathione = a hydroxy polyunsaturated fatty acid + glutathione disulfide + H2O. It catalyses the reaction 2 glutathione + H2O2 = glutathione disulfide + 2 H2O. It carries out the reaction tert-butyl hydroperoxide + 2 glutathione = tert-butanol + glutathione disulfide + H2O. The catalysed reaction is cumene hydroperoxide + 2 glutathione = 2-phenylpropan-2-ol + glutathione disulfide + H2O. The enzyme catalyses (9S)-hydroperoxy-(10E,12Z)-octadecadienoate + 2 glutathione = (9S)-hydroxy-(10E,12Z)-octadecadienoate + glutathione disulfide + H2O. It catalyses the reaction (13S)-hydroperoxy-(9Z,11E)-octadecadienoate + 2 glutathione = (13S)-hydroxy-(9Z,11E)-octadecadienoate + glutathione disulfide + H2O. It carries out the reaction (5S)-hydroperoxy-(6E,8Z,11Z,14Z)-eicosatetraenoate + 2 glutathione = (5S)-hydroxy-(6E,8Z,11Z,14Z)-eicosatetraenoate + glutathione disulfide + H2O. The catalysed reaction is (12R)-hydroperoxy-(5Z,8Z,10E,14Z)-eicosatetraenoate + 2 glutathione = (12R)-hydroxy-(5Z,8Z,10E,14Z)-eicosatetraenoate + glutathione disulfide + H2O. The enzyme catalyses (12S)-hydroperoxy-(5Z,8Z,10E,14Z)-eicosatetraenoate + 2 glutathione = (12S)-hydroxy-(5Z,8Z,10E,14Z)-eicosatetraenoate + glutathione disulfide + H2O. It catalyses the reaction (15S)-hydroperoxy-(5Z,8Z,11Z,13E)-eicosatetraenoate + 2 glutathione = (15S)-hydroxy-(5Z,8Z,11Z,13E)-eicosatetraenoate + glutathione disulfide + H2O. It carries out the reaction (5S)-hydroperoxy-(6E,8Z,11Z,14Z,17Z)-eicosapentaenoate + 2 glutathione = (5S)-hydroxy-(6E,8Z,11Z,14Z,17Z)-eicosapentaenoate + glutathione disulfide + H2O. The catalysed reaction is (12S)-hydroperoxy-(5Z,8Z,10E,14Z,17Z)-eicosapentaenoate + 2 glutathione = (12S)-hydroxy-(5Z,8Z,10E,14Z,17Z)-eicosapentaenoate + glutathione disulfide + H2O. The enzyme catalyses (15S)-hydroperoxy-(5Z,8Z,11Z,13E,17Z)-eicosapentaenoate + 2 glutathione = (15S)-hydroxy-(5Z,8Z,11Z,13E,17Z)-eicosapentaenoate + glutathione disulfide + H2O. It catalyses the reaction (15S)-hydroperoxy-(11Z,13E)-eicosadienoate + 2 glutathione = (15S)-hydroxy-(11Z,13E)-eicosadienoate + glutathione disulfide + H2O. It carries out the reaction (17S)-hydroperoxy-(4Z,7Z,10Z,13Z,15E,19Z)-docosahexaenoate + 2 glutathione = (17S)-hydroxy-(4Z,7Z,10Z,13Z,15E,19Z)-docosahexaenoate + glutathione disulfide + H2O. The catalysed reaction is a hydroperoxy-1,2-diacyl-glycero-3-phosphocholine + 2 glutathione = a hydroxy-1,2-diacyl-glycero-3-phosphocholine + glutathione disulfide + H2O. Functionally, essential antioxidant peroxidase that directly reduces phospholipid hydroperoxide even if they are incorporated in membranes and lipoproteins. Can also reduce fatty acid hydroperoxide, cholesterol hydroperoxide and thymine hydroperoxide. Plays a key role in protecting cells from oxidative damage by preventing membrane lipid peroxidation. Required to prevent cells from ferroptosis, a non-apoptotic cell death resulting from an iron-dependent accumulation of lipid reactive oxygen species. The presence of selenocysteine (Sec) versus Cys at the active site is essential for life: it provides resistance to overoxidation and prevents cells against ferroptosis. The presence of Sec at the active site is also essential for the survival of a specific type of parvalbumin-positive interneurons, thereby preventing against fatal epileptic seizures. May be required to protect cells from the toxicity of ingested lipid hydroperoxides. Required for normal sperm development and male fertility. Essential for maturation and survival of photoreceptor cells. Plays a role in a primary T-cell response to viral and parasitic infection by protecting T-cells from ferroptosis and by supporting T-cell expansion. Plays a role of glutathione peroxidase in platelets in the arachidonic acid metabolism. Reduces hydroperoxy ester lipids formed by a 15-lipoxygenase that may play a role as down-regulator of the cellular 15-lipoxygenase pathway. Can also reduce small soluble hydroperoxides such as H2O2, cumene hydroperoxide and tert-butyl hydroperoxide. This chain is Phospholipid hydroperoxide glutathione peroxidase, found in Sus scrofa (Pig).